Reading from the N-terminus, the 87-residue chain is Small ribosomal subunit protein bS20 (87 aa).

Residues 1 to 26 (MANIKSAKKRAVQSEKRRKHNASRRS) form a disordered region.

Belongs to the bacterial ribosomal protein bS20 family.

In terms of biological role, binds directly to 16S ribosomal RNA. The protein is Small ribosomal subunit protein bS20 of Yersinia enterocolitica serotype O:8 / biotype 1B (strain NCTC 13174 / 8081).